The following is a 162-amino-acid chain: Ribosomal RNA large subunit methyltransferase H (162 aa).

S-adenosyl-L-methionine is bound at residue Gly108.

It belongs to the RNA methyltransferase RlmH family. In terms of assembly, homodimer.

Its subcellular location is the cytoplasm. It carries out the reaction pseudouridine(1915) in 23S rRNA + S-adenosyl-L-methionine = N(3)-methylpseudouridine(1915) in 23S rRNA + S-adenosyl-L-homocysteine + H(+). In terms of biological role, specifically methylates the pseudouridine at position 1915 (m3Psi1915) in 23S rRNA. This is Ribosomal RNA large subunit methyltransferase H from Methylobacterium sp. (strain 4-46).